Consider the following 845-residue polypeptide: Taste receptor type 1 member 3 (845 aa).

The signal sequence occupies residues methionine 1–glycine 18. Over alanine 19 to leucine 568 the chain is Extracellular. Asparagine 128 and asparagine 262 each carry an N-linked (GlcNAc...) asparagine glycan. Residues valine 569–isoleucine 589 traverse the membrane as a helical segment. Topologically, residues arginine 590–glycine 601 are cytoplasmic. The chain crosses the membrane as a helical span at residues glycine 602 to phenylalanine 622. The Extracellular portion of the chain corresponds to proline 623–leucine 637. Residues leucine 638 to valine 658 traverse the membrane as a helical segment. The Cytoplasmic segment spans residues glycine 659 to tryptophan 680. Residues leucine 681 to phenylalanine 701 form a helical membrane-spanning segment. Residues proline 702–serine 727 are Extracellular-facing. The helical transmembrane segment at phenylalanine 728 to leucine 748 threads the bilayer. The Cytoplasmic segment spans residues valine 749–arginine 760. The chain crosses the membrane as a helical span at residues glycine 761–alanine 781. Residues asparagine 782–proline 789 are Extracellular-facing. The chain crosses the membrane as a helical span at residues threonine 790 to proline 810. Over lysine 811–threonine 845 the chain is Cytoplasmic.

Belongs to the G-protein coupled receptor 3 family. TAS1R subfamily. Forms homodimers or heterodimers with TAS1R1 and TAS1R2.

It is found in the cell membrane. Its function is as follows. Putative taste receptor. TAS1R1/TAS1R3 responds to the umami taste stimulus (the taste of monosodium glutamate). TAS1R2/TAS1R3 recognizes diverse natural and synthetic sweeteners. TAS1R3 is essential for the recognition and response to the disaccharide trehalose. Sequence differences within and between species can significantly influence the selectivity and specificity of taste responses. The sequence is that of Taste receptor type 1 member 3 (TAS1R3) from Canis lupus familiaris (Dog).